The chain runs to 286 residues: Shikimate dehydrogenase (NADP(+)) (286 aa).

Residues 21 to 23 (TLS) and T68 contribute to the shikimate site. K72 serves as the catalytic Proton acceptor. D84 is an NADP(+) binding site. 2 residues coordinate shikimate: N93 and D108. NADP(+) contacts are provided by residues 132–136 (GYGGA) and L226. Shikimate is bound at residue Y228. NADP(+) is bound at residue G249.

Belongs to the shikimate dehydrogenase family. As to quaternary structure, homodimer.

It catalyses the reaction shikimate + NADP(+) = 3-dehydroshikimate + NADPH + H(+). It functions in the pathway metabolic intermediate biosynthesis; chorismate biosynthesis; chorismate from D-erythrose 4-phosphate and phosphoenolpyruvate: step 4/7. In terms of biological role, involved in the biosynthesis of the chorismate, which leads to the biosynthesis of aromatic amino acids. Catalyzes the reversible NADPH linked reduction of 3-dehydroshikimate (DHSA) to yield shikimate (SA). This is Shikimate dehydrogenase (NADP(+)) from Thermosynechococcus vestitus (strain NIES-2133 / IAM M-273 / BP-1).